Consider the following 348-residue polypeptide: 4-hydroxy-2-oxovalerate aldolase (348 aa).

The 253-residue stretch at 9–261 folds into the Pyruvate carboxyltransferase domain; sequence ITVHDMTLRD…RTGVDVWKIQ (253 aa). 17–18 contributes to the substrate binding site; it reads RD. Asp-18 provides a ligand contact to Mn(2+). His-21 acts as the Proton acceptor in catalysis. Substrate contacts are provided by Ser-171 and His-200. Residues His-200 and His-202 each coordinate Mn(2+). Tyr-291 provides a ligand contact to substrate.

The protein belongs to the 4-hydroxy-2-oxovalerate aldolase family.

It carries out the reaction (S)-4-hydroxy-2-oxopentanoate = acetaldehyde + pyruvate. The sequence is that of 4-hydroxy-2-oxovalerate aldolase from Ralstonia pickettii (strain 12J).